We begin with the raw amino-acid sequence, 233 residues long: Ribosome-recycling factor, mitochondrial (233 aa).

This sequence belongs to the RRF family.

It is found in the mitochondrion. Functionally, necessary for protein synthesis in mitochondria. Functions as a ribosome recycling factor in mitochondria. This chain is Ribosome-recycling factor, mitochondrial (RRF1), found in Candida glabrata (strain ATCC 2001 / BCRC 20586 / JCM 3761 / NBRC 0622 / NRRL Y-65 / CBS 138) (Yeast).